The chain runs to 130 residues: Ribosome-binding factor A (130 aa).

The protein belongs to the RbfA family. In terms of assembly, monomer. Binds 30S ribosomal subunits, but not 50S ribosomal subunits or 70S ribosomes.

It is found in the cytoplasm. Functionally, one of several proteins that assist in the late maturation steps of the functional core of the 30S ribosomal subunit. Associates with free 30S ribosomal subunits (but not with 30S subunits that are part of 70S ribosomes or polysomes). Required for efficient processing of 16S rRNA. May interact with the 5'-terminal helix region of 16S rRNA. The polypeptide is Ribosome-binding factor A (Prochlorococcus marinus (strain SARG / CCMP1375 / SS120)).